A 267-amino-acid polypeptide reads, in one-letter code: Putative ankyrin repeat protein RF_1099 (267 aa).

4 ANK repeats span residues aspartate 46 to glutamine 75, leucine 78 to leucine 107, aspartate 136 to valine 165, and threonine 170 to isoleucine 199. Residues lysine 238–serine 265 are a coiled coil.

The chain is Putative ankyrin repeat protein RF_1099 from Rickettsia felis (strain ATCC VR-1525 / URRWXCal2) (Rickettsia azadi).